A 379-amino-acid polypeptide reads, in one-letter code: 3-dehydroquinate synthase (379 aa).

This sequence belongs to the archaeal-type DHQ synthase family.

The catalysed reaction is 2-amino-2,3,7-trideoxy-D-lyxo-hept-6-ulosonate + NAD(+) + H2O = 3-dehydroquinate + NH4(+) + NADH + H(+). Functionally, catalyzes the oxidative deamination and cyclization of 2-amino-3,7-dideoxy-D-threo-hept-6-ulosonic acid (ADH) to yield 3-dehydroquinate (DHQ), which is fed into the canonical shikimic pathway of aromatic amino acid biosynthesis. This Methanococcoides burtonii (strain DSM 6242 / NBRC 107633 / OCM 468 / ACE-M) protein is 3-dehydroquinate synthase.